A 129-amino-acid polypeptide reads, in one-letter code: MPMNRREMVMATTGAALAAAAAVPLLSGGEGEGAAEAAAAPAKATGRGREHTERYLGRSIRVAAPADGGGVFIDGRPLHIMKFADDAYLSSMCHYEMAPTPLHAARRAVEELRGAALQPSTHGTHVTHL.

A signal peptide (tat-type signal) is located at residues 1–37 (MPMNRREMVMATTGAALAAAAAVPLLSGGEGEGAAEA). Residues 32-51 (EGAAEAAAAPAKATGRGREH) form a disordered region. The span at 34–45 (AAEAAAAPAKAT) shows a compositional bias: low complexity.

The protein belongs to the melC1 family. Post-translationally, predicted to be exported by the Tat system. The position of the signal peptide cleavage has not been experimentally proven.

Involved in the transfer of Cu(2+) ions to the apo form of o-aminophenol oxidase GriF in the grixazone biosynthetic pathway. The chain is Copper chaperone GriE (griE) from Streptomyces griseus subsp. griseus (strain JCM 4626 / CBS 651.72 / NBRC 13350 / KCC S-0626 / ISP 5235).